The primary structure comprises 1377 residues: DNA-directed RNA polymerase subunit beta'' (1377 aa).

Residues Cys-224, Cys-294, Cys-301, and Cys-304 each contribute to the Zn(2+) site.

Belongs to the RNA polymerase beta' chain family. RpoC2 subfamily. In plastids the minimal PEP RNA polymerase catalytic core is composed of four subunits: alpha, beta, beta', and beta''. When a (nuclear-encoded) sigma factor is associated with the core the holoenzyme is formed, which can initiate transcription. Zn(2+) is required as a cofactor.

It localises to the plastid. The protein localises to the chloroplast. The enzyme catalyses RNA(n) + a ribonucleoside 5'-triphosphate = RNA(n+1) + diphosphate. DNA-dependent RNA polymerase catalyzes the transcription of DNA into RNA using the four ribonucleoside triphosphates as substrates. The sequence is that of DNA-directed RNA polymerase subunit beta'' from Calycanthus floridus var. glaucus (Eastern sweetshrub).